Reading from the N-terminus, the 178-residue chain is Ribosome rescue factor SmrB (178 aa).

The 76-residue stretch at 99–174 (LDLHGLTQMQ…GNAALLILIE (76 aa)) folds into the Smr domain.

The protein belongs to the SmrB family. Associates with collided ribosomes, but not with correctly translating polysomes.

Its function is as follows. Acts as a ribosome collision sensor. Detects stalled/collided disomes (pairs of ribosomes where the leading ribosome is stalled and a second ribosome has collided with it) and endonucleolytically cleaves mRNA at the 5' boundary of the stalled ribosome. Stalled/collided disomes form a new interface (primarily via the 30S subunits) that binds SmrB. Cleaved mRNA becomes available for tmRNA ligation, leading to ribosomal subunit dissociation and rescue of stalled ribosomes. The polypeptide is Ribosome rescue factor SmrB (Photorhabdus laumondii subsp. laumondii (strain DSM 15139 / CIP 105565 / TT01) (Photorhabdus luminescens subsp. laumondii)).